Consider the following 429-residue polypeptide: Ribosomal RNA small subunit methyltransferase B (429 aa).

Residues 254–260 (CAAPGGK), aspartate 277, aspartate 303, and aspartate 322 contribute to the S-adenosyl-L-methionine site. The active-site Nucleophile is the cysteine 375.

It belongs to the class I-like SAM-binding methyltransferase superfamily. RsmB/NOP family.

The protein resides in the cytoplasm. The catalysed reaction is cytidine(967) in 16S rRNA + S-adenosyl-L-methionine = 5-methylcytidine(967) in 16S rRNA + S-adenosyl-L-homocysteine + H(+). Specifically methylates the cytosine at position 967 (m5C967) of 16S rRNA. In Cronobacter sakazakii (strain ATCC BAA-894) (Enterobacter sakazakii), this protein is Ribosomal RNA small subunit methyltransferase B.